The primary structure comprises 800 residues: Kolavenyl diphosphate synthase TPS5, chloroplastic (800 aa).

The transit peptide at 1 to 75 (MSLAYSQATS…VILTAEKSVD (75 aa)) directs the protein to the chloroplast. K244 lines the substrate pocket. Mg(2+) contacts are provided by D375 and D377. The short motif at 375 to 378 (DVDD) is the DXDD motif element. Residue K461 coordinates substrate.

Belongs to the terpene synthase family. It depends on Mg(2+) as a cofactor. Mostly expressed in trichomes of leaves and fruits.

It is found in the plastid. The protein localises to the chloroplast. The catalysed reaction is (2E,6E,10E)-geranylgeranyl diphosphate = (+)-kolavenyl diphosphate. It functions in the pathway secondary metabolite biosynthesis; terpenoid biosynthesis. Its function is as follows. Involved in the biosynthesis of labdane-type diterpenoid including cleroda-dienols, and peregrinol lactones and furan derivatives, dopaminergic diterpenoids that can bind to dopamine receptors in the human pituitary gland, have probably ability to lower prolactin levels, and are used to treat menstrual cycle disorders (e.g. premenstrual syndrome and mastodynia). Terpene synthase that produces kolavenyl diphosphate from geranylgeranyl diphosphate (GGPP). This is Kolavenyl diphosphate synthase TPS5, chloroplastic from Vitex agnus-castus (Chaste tree).